Reading from the N-terminus, the 1310-residue chain is Angiotensin-converting enzyme (1310 aa).

Positions 1–33 (MGAAPGRRGPRLLRPPPPLLLLLLLLRPPPAAL) are cleaved as a signal peptide. The Extracellular portion of the chain corresponds to 34 to 1260 (TLDPGLLPGD…GMNLDAQQAR (1227 aa)). Peptidase M2 domains follow at residues 45-628 (AADE…LGWP) and 647-1226 (VTDE…LGWP). Residues asparagine 59, asparagine 79, and asparagine 151 are each glycosylated (N-linked (GlcNAc...) asparagine). Cysteines 162 and 170 form a disulfide. Tyrosine 236 contributes to the chloride binding site. Asparagine 323 is a glycosylation site (N-linked (GlcNAc...) asparagine). Cysteine 364 and cysteine 382 form a disulfide bridge. Histidine 395 contacts Zn(2+). Catalysis depends on glutamate 396, which acts as the Proton acceptor 1. Zn(2+)-binding residues include histidine 399 and glutamate 422. N-linked (GlcNAc...) asparagine glycans are attached at residues asparagine 449 and asparagine 513. Histidine 524 functions as the Proton donor 1 in the catalytic mechanism. Chloride is bound at residue arginine 533. Cysteine 549 and cysteine 561 form a disulfide bridge. Residues asparagine 681, asparagine 699, and asparagine 718 are each glycosylated (N-linked (GlcNAc...) asparagine). The cysteines at positions 761 and 767 are disulfide-linked. Chloride-binding residues include arginine 795 and tyrosine 833. An N-linked (GlcNAc...) asparagine glycan is attached at asparagine 946. Cysteine 961 and cysteine 979 form a disulfide bridge. Residue histidine 992 participates in Zn(2+) binding. Glutamate 993 serves as the catalytic Proton acceptor 2. Residues histidine 996 and glutamate 1020 each contribute to the Zn(2+) site. Chloride is bound by residues tryptophan 1094 and arginine 1098. The active-site Proton donor 2 is histidine 1122. Arginine 1131 contributes to the chloride binding site. A disulfide bond links cysteine 1147 and cysteine 1159. Asparagine 1195 carries an N-linked (GlcNAc...) asparagine glycan. The tract at residues 1219 to 1260 (HGEKLGWPQYTWTPNSARSEGSLPDSGRVNFLGMNLDAQQAR) is juxtamembrane stalk. Residues 1261–1281 (VGQWVLLFLGVALLLASLGLT) form a helical membrane-spanning segment. At 1282–1310 (QRLFSIRYQSLRQPHHGPQFGSEVELRHS) the chain is on the cytoplasmic side. Serine 1303 is modified (phosphoserine).

The protein belongs to the peptidase M2 family. As to quaternary structure, monomer and homodimer; homodimerizes following binding to an inhibitor. Interacts with calmodulin (CALM1, CALM2 or CALM3); interaction takes place in the cytoplasmic region and regulates phosphorylation and proteolytic cleavage. Zn(2+) is required as a cofactor. Requires chloride as cofactor. Post-translationally, N-glycosylated. In terms of processing, phosphorylated by CK2 on Ser-1303; which allows membrane retention. Phosphorylated on tyrosine residues on its extracellular part, promoting cleavage by secretase enzymes and formation of the soluble form (Angiotensin-converting enzyme, soluble form). Produced following proteolytic cleavage by secretase enzymes that cleave the transmembrane form in the juxtamembrane stalk region upstream of the transmembrane region. Cleavage can take place at different sites of the juxtamembrane stalk region. As to expression, testis-specific isoform is expressed in spermatocytes, adult testis.

It localises to the cell membrane. It is found in the cytoplasm. Its subcellular location is the secreted. It carries out the reaction Release of a C-terminal dipeptide, oligopeptide-|-Xaa-Yaa, when Xaa is not Pro, and Yaa is neither Asp nor Glu. Thus, conversion of angiotensin I to angiotensin II, with increase in vasoconstrictor activity, but no action on angiotensin II.. It catalyses the reaction angiotensin I + H2O = L-histidyl-L-leucine + angiotensin II. The enzyme catalyses bradykinin + H2O = L-Phe-L-Arg + bradykinin(1-7). The catalysed reaction is substance P + H2O = substance P(1-9) + L-Leu-L-Met-NH2. It carries out the reaction substance P + H2O = substance P(1-8) + Gly-L-Leu-L-Met-NH2. It catalyses the reaction substance P + H2O = L-Phe-L-Phe-Gly-L-Leu-L-Met-NH2 + substance P(1-6). The enzyme catalyses neurotensin + H2O = neurotensin(1-11) + L-isoleucyl-L-leucine. The catalysed reaction is goralatide + H2O = N-acetyl-L-seryl-L-aspartate + L-lysyl-L-proline. It carries out the reaction Met-enkephalin + H2O = L-phenylalanyl-L-methionine + L-tyrosylglycylglycine. It catalyses the reaction Leu-enkephalin + H2O = L-tyrosylglycylglycine + L-phenylalanyl-L-leucine. The enzyme catalyses Met-enkephalin-Arg-Phe + H2O = L-arginyl-L-phenylalanine + Met-enkephalin. Its activity is regulated as follows. The dipeptidyl carboxypeptidase activity is strongly activated by chloride. Specifically inhibited by lisinopril. Inhibited by mixanpril, an orally-active drug used for the treatment of hypertension. Strongly inhibited by lisinopril and captopril. In terms of biological role, dipeptidyl carboxypeptidase that removes dipeptides from the C-terminus of a variety of circulating hormones, such as angiotensin I, bradykinin or enkephalins, thereby playing a key role in the regulation of blood pressure, electrolyte homeostasis or synaptic plasticity. Composed of two similar catalytic domains, each possessing a functional active site, with different selectivity for substrates. Plays a major role in the angiotensin-renin system that regulates blood pressure and sodium retention by the kidney by converting angiotensin I to angiotensin II, resulting in an increase of the vasoconstrictor activity of angiotensin. Also able to inactivate bradykinin, a potent vasodilator, and therefore enhance the blood pressure response. Acts as a regulator of synaptic transmission by mediating cleavage of neuropeptide hormones, such as substance P, neurotensin or enkephalins. Catalyzes degradation of different enkephalin neuropeptides (Met-enkephalin, Leu-enkephalin, Met-enkephalin-Arg-Phe and possibly Met-enkephalin-Arg-Gly-Leu). Acts as a regulator of synaptic plasticity in the nucleus accumbens of the brain by mediating cleavage of Met-enkephalin-Arg-Phe, a strong ligand of Mu-type opioid receptor OPRM1, into Met-enkephalin. Met-enkephalin-Arg-Phe cleavage by ACE decreases activation of OPRM1, leading to long-term synaptic potentiation of glutamate release. Also acts as a regulator of hematopoietic stem cell differentiation by mediating degradation of hemoregulatory peptide N-acetyl-SDKP (AcSDKP). Acts as a regulator of cannabinoid signaling pathway by mediating degradation of hemopressin, an antagonist peptide of the cannabinoid receptor CNR1. Involved in amyloid-beta metabolism by catalyzing degradation of Amyloid-beta protein 40 and Amyloid-beta protein 42 peptides, thereby preventing plaque formation. Catalyzes cleavage of cholecystokinin (maturation of Cholecystokinin-8 and Cholecystokinin-5) and Gonadoliberin-1 (both maturation and degradation) hormones. Degradation of hemoregulatory peptide N-acetyl-SDKP (AcSDKP) and amyloid-beta proteins is mediated by the N-terminal catalytic domain, while angiotensin I and cholecystokinin cleavage is mediated by the C-terminal catalytic region. Functionally, soluble form that is released in blood plasma and other body fluids following proteolytic cleavage in the juxtamembrane stalk region. Isoform produced by alternative promoter usage that is specifically expressed in spermatocytes and adult testis, and which is required for male fertility. In contrast to somatic isoforms, only contains one catalytic domain. Acts as a dipeptidyl carboxypeptidase that removes dipeptides from the C-terminus of substrates. The identity of substrates that are needed for male fertility is unknown. May also have a glycosidase activity which releases GPI-anchored proteins from the membrane by cleaving the mannose linkage in the GPI moiety. The GPIase activity was reported to be essential for the egg-binding ability of the sperm. This activity is however unclear and has been challenged by other groups, suggesting that it may be indirect. The chain is Angiotensin-converting enzyme from Oryctolagus cuniculus (Rabbit).